Consider the following 60-residue polypeptide: Large ribosomal subunit protein uL30 (60 aa).

This sequence belongs to the universal ribosomal protein uL30 family. As to quaternary structure, part of the 50S ribosomal subunit.

This is Large ribosomal subunit protein uL30 from Agathobacter rectalis (strain ATCC 33656 / DSM 3377 / JCM 17463 / KCTC 5835 / VPI 0990) (Eubacterium rectale).